The following is a 326-amino-acid chain: Transmembrane protein PVRIG (326 aa).

A run of 3 helical transmembrane segments spans residues 26–46 (LVLP…EVWV), 62–78 (CGFL…VSWG), and 172–192 (LAGI…LLHL). Tyr-233 bears the Phosphotyrosine mark. The disordered stretch occupies residues 296–326 (AGERPPHTGPGLTLFPDPRGPRAMEGPLGVR).

Interacts with NECTIN2, hence competing with CD226. In terms of tissue distribution, expressed in some types of immune cells. Expressed at low levels on the surface of freshly isolated T-cells and natural killer (NK) cells, predominantly on CD8+ T-cells (mainly memory/effector, but not naive cells) and on both CD16+ and CD16- NK cells. T-cell expression levels are variable among individuals. Not detected in B-cells, naive or helper T-cells, monocytes, nor neutrophils (at protein level). Not detected in dendritic cells.

It is found in the cell membrane. Functionally, cell surface receptor for NECTIN2. May act as a coinhibitory receptor that suppresses T-cell receptor-mediated signals. Following interaction with NECTIN2, inhibits T-cell proliferation. Competes with CD226 for NECTIN2-binding. The polypeptide is Transmembrane protein PVRIG (PVRIG) (Homo sapiens (Human)).